Consider the following 128-residue polypeptide: Ribonuclease pancreatic (128 aa).

The span at 1-15 shows a compositional bias: basic and acidic residues; that stretch reads SESSAKKFERQHMDS. Positions 1 to 28 are disordered; that stretch reads SESSAKKFERQHMDSRGSPSTNPNYCNE. Substrate-binding residues include Lys7 and Arg10. The active-site Proton acceptor is the His12. 4 cysteine pairs are disulfide-bonded: Cys26–Cys84, Cys40–Cys95, Cys58–Cys110, and Cys65–Cys72. N-linked (GlcNAc...) asparagine glycosylation occurs at Asn34. Substrate-binding positions include 41–45, Lys66, and Arg85; that span reads KPVNT. His119 functions as the Proton donor in the catalytic mechanism.

This sequence belongs to the pancreatic ribonuclease family. Monomer. Interacts with and forms tight 1:1 complexes with RNH1. Dimerization of two such complexes may occur. Interaction with RNH1 inhibits this protein. As to expression, pancreas.

It localises to the secreted. The enzyme catalyses an [RNA] containing cytidine + H2O = an [RNA]-3'-cytidine-3'-phosphate + a 5'-hydroxy-ribonucleotide-3'-[RNA].. The catalysed reaction is an [RNA] containing uridine + H2O = an [RNA]-3'-uridine-3'-phosphate + a 5'-hydroxy-ribonucleotide-3'-[RNA].. Its function is as follows. Endonuclease that catalyzes the cleavage of RNA on the 3' side of pyrimidine nucleotides. Acts on single-stranded and double-stranded RNA. The polypeptide is Ribonuclease pancreatic (RNASE1) (Myocastor coypus (Coypu)).